The primary structure comprises 109 residues: Large ribosomal subunit protein eL30A (109 aa).

It belongs to the eukaryotic ribosomal protein eL30 family. As to quaternary structure, component of the large ribosomal subunit (LSU). Mature yeast ribosomes consist of a small (40S) and a large (60S) subunit. The 40S small subunit contains 1 molecule of ribosomal RNA (18S rRNA) and at least 33 different proteins. The large 60S subunit contains 3 rRNA molecules (25S, 5.8S and 5S rRNA) and at least 46 different proteins.

The protein localises to the cytoplasm. Functionally, component of the ribosome, a large ribonucleoprotein complex responsible for the synthesis of proteins in the cell. The small ribosomal subunit (SSU) binds messenger RNAs (mRNAs) and translates the encoded message by selecting cognate aminoacyl-transfer RNA (tRNA) molecules. The large subunit (LSU) contains the ribosomal catalytic site termed the peptidyl transferase center (PTC), which catalyzes the formation of peptide bonds, thereby polymerizing the amino acids delivered by tRNAs into a polypeptide chain. The nascent polypeptides leave the ribosome through a tunnel in the LSU and interact with protein factors that function in enzymatic processing, targeting, and the membrane insertion of nascent chains at the exit of the ribosomal tunnel. The chain is Large ribosomal subunit protein eL30A (rpl3001) from Schizosaccharomyces pombe (strain 972 / ATCC 24843) (Fission yeast).